Consider the following 826-residue polypeptide: Capsid-associated protein Vp91 (826 aa).

The N-terminal stretch at 1–18 (MSDVVLLVLAIIFIIIFV) is a signal peptide. The C2HC BV-type zinc-finger motif lies at 147 to 196 (CVPINPCDTRAPGLYAMDEHLLDALVHSQHLDKDYTINAHLQHPTLYLRC). 2 disulfide bridges follow: C207-C220 and C260-C273. N210 carries an N-linked (GlcNAc...) asparagine; by host glycan. In terms of domain architecture, Chitin-binding type-2 spans 223–281 (NELCQGRPDGYVLDYFPETLLVNEFVECYESKHVVKQCPEQHVFDRQLMTCVQAHPCAF). Residues N333, N371, N413, N510, N520, and N609 are each glycosylated (N-linked (GlcNAc...) asparagine; by host). Residues 651–679 (GDGDHWGPDLPPPVQPDSEPDESEPEPEV) are disordered. Positions 668 to 677 (SEPDESEPEP) are enriched in acidic residues. Residue N722 is glycosylated (N-linked (GlcNAc...) asparagine; by host).

It localises to the virion. Probable capsid-associated protein. The polypeptide is Capsid-associated protein Vp91 (Epiphyas postvittana nucleopolyhedrovirus (EppoMNPV)).